Reading from the N-terminus, the 480-residue chain is Selenium-binding protein 3 (480 aa).

Residues Cys-12 and Cys-13 each coordinate selenite.

It belongs to the selenium-binding protein family. Expressed in young seedlings, mostly in roots.

The chain is Selenium-binding protein 3 (SBP3) from Arabidopsis thaliana (Mouse-ear cress).